A 288-amino-acid chain; its full sequence is Polyamine aminopropyltransferase (288 aa).

Residues 11–245 (IEWYPRGYGV…SPWSFLVGVK (235 aa)) enclose the PABS domain. Position 36 (Q36) interacts with S-methyl-5'-thioadenosine. Spermidine is bound by residues H67 and D91. S-methyl-5'-thioadenosine contacts are provided by residues E111 and 148 to 149 (DG). Residue D166 is the Proton acceptor of the active site. 166–169 (DSTD) contacts spermidine. P173 serves as a coordination point for S-methyl-5'-thioadenosine.

This sequence belongs to the spermidine/spermine synthase family. In terms of assembly, homodimer or homotetramer.

The protein localises to the cytoplasm. The enzyme catalyses S-adenosyl 3-(methylsulfanyl)propylamine + agmatine = N(1)-(3-aminopropyl)agmatine + S-methyl-5'-thioadenosine + H(+). The catalysed reaction is S-adenosyl 3-(methylsulfanyl)propylamine + putrescine = S-methyl-5'-thioadenosine + spermidine + H(+). It catalyses the reaction cadaverine + S-adenosyl 3-(methylsulfanyl)propylamine = aminopropylcadaverine + S-methyl-5'-thioadenosine + H(+). Its pathway is amine and polyamine biosynthesis; spermidine biosynthesis; spermidine from putrescine: step 1/1. Involved in the biosynthesis of polyamines which are thought to support the growth of thermophilic microorganisms under high-temperature conditions. It seems that long-chain and branched-chain of polyamines effectively stabilize DNA and RNA, respectively. Catalyzes the irreversible transfer of a propylamine group from the amino donor S-adenosylmethioninamine (decarboxy-AdoMet) to agmatine to yield N1-aminopropylagmatine. It can also use cadaverine (1,5-diaminopentane) and putrescine (1,4-diaminobutane) as substrate with a lower activity than that of agmatine. The reaction involves a nucleophilic attack on the C-3 methylene of the propylamine moiety adjacent to the positively charged sulfur of decarboxy-AdoMet. The polypeptide is Polyamine aminopropyltransferase (Thermococcus kodakarensis (strain ATCC BAA-918 / JCM 12380 / KOD1) (Pyrococcus kodakaraensis (strain KOD1))).